Here is a 172-residue protein sequence, read N- to C-terminus: WW domain binding protein VOPP1 (172 aa).

Residues 1–22 form the signal peptide; that stretch reads MARPLGRVAALLLGLLMECTEA. Residues 23–60 lie on the Extracellular side of the membrane; the sequence is KKHCWYFEGLYPTYYICRSYEDCCGSRCCVRALSIQRL. Residues 61–81 traverse the membrane as a helical segment; that stretch reads WYFWFLLMMGVLFCCGAGFFI. At 82-172 the chain is on the cytoplasmic side; the sequence is RRRMYPPPLI…PPYEQVVKDK (91 aa). The tract at residues 139–172 is disordered; that stretch reads QVQPNSPHGGTTYPPPPSYCNTPPPPYEQVVKDK. A compositionally biased stretch (pro residues) spans 151–165; sequence YPPPPSYCNTPPPPY.

This sequence belongs to the VOPP1/ECOP family. Interacts with WWOX (via WW domain).

The protein resides in the cytoplasmic vesicle membrane. It localises to the late endosome membrane. It is found in the lysosome membrane. Increases the transcriptional activity of NFKB1 by facilitating its nuclear translocation, DNA-binding and associated apoptotic response, when overexpressed. May sequester WWOX in lysosomal vesicles and thereby regulate WWOX role as tumor suppressor. This chain is WW domain binding protein VOPP1, found in Rattus norvegicus (Rat).